The following is a 318-amino-acid chain: Protein disulfide-isomerase MPD1 (318 aa).

A signal peptide spans 1 to 21 (MLFLNIIKLLLGLFIMNEVKA). Positions 22–158 (QNFYDSDPHI…SLSRIRSYVK (137 aa)) constitute a Thioredoxin domain. Asn-47 carries N-linked (GlcNAc...) asparagine glycosylation. An intrachain disulfide couples Cys-59 to Cys-62. Residue Asn-307 is glycosylated (N-linked (GlcNAc...) asparagine). The short motif at 315 to 318 (HDEL) is the Prevents secretion from ER element.

Belongs to the protein disulfide isomerase family. Interacts with CNE1 and EPS1.

Its subcellular location is the endoplasmic reticulum lumen. It catalyses the reaction Catalyzes the rearrangement of -S-S- bonds in proteins.. Participates in the folding of proteins containing disulfide bonds. The chain is Protein disulfide-isomerase MPD1 (MPD1) from Saccharomyces cerevisiae (strain ATCC 204508 / S288c) (Baker's yeast).